The primary structure comprises 440 residues: 23S rRNA (uracil(1939)-C(5))-methyltransferase RlmD (440 aa).

In terms of domain architecture, TRAM spans 8–69 (PQKINKLQRE…RQFGLATTKK (62 aa)). [4Fe-4S] cluster-binding residues include Cys-82, Cys-88, Cys-91, and Cys-169. The S-adenosyl-L-methionine site is built by Gln-272, Phe-301, Asn-306, Glu-322, Asp-349, and Asp-370. Catalysis depends on Cys-396, which acts as the Nucleophile.

It belongs to the class I-like SAM-binding methyltransferase superfamily. RNA M5U methyltransferase family. RlmD subfamily.

The enzyme catalyses uridine(1939) in 23S rRNA + S-adenosyl-L-methionine = 5-methyluridine(1939) in 23S rRNA + S-adenosyl-L-homocysteine + H(+). Catalyzes the formation of 5-methyl-uridine at position 1939 (m5U1939) in 23S rRNA. The sequence is that of 23S rRNA (uracil(1939)-C(5))-methyltransferase RlmD from Mannheimia succiniciproducens (strain KCTC 0769BP / MBEL55E).